Consider the following 461-residue polypeptide: Steroidogenic factor 1 (461 aa).

Positions 10-85 (DELCPVCGDK…VGMRLEAVRA (76 aa)) form a DNA-binding region, nuclear receptor. An NR C4-type zinc finger spans residues 13–33 (CPVCGDKVSGYHYGLLTCESC). N6-acetyllysine is present on residues K34, K38, and K72. The NR C4-type zinc finger occupies 49–73 (CTESQSCKIDKTLRKRCPFCRFQKC). Residue K119 forms a Glycyl lysine isopeptide (Lys-Gly) (interchain with G-Cter in SUMO) linkage. Residues 119–153 (KLETGPPMGVPPPPPPPPDYMLPPGLHVPEPKGLA) are disordered. Over residues 126-139 (MGVPPPPPPPPDYM) the composition is skewed to pro residues. A Glycyl lysine isopeptide (Lys-Gly) (interchain with G-Cter in SUMO) cross-link involves residue K194. Phosphoserine; by CDK7 is present on S203. The 238-residue stretch at 222–459 (GVPELILQLL…NLLIEMLQAK (238 aa)) folds into the NR LBD domain. Positions 341, 436, and 440 each coordinate a 1,2-diacyl-sn-glycero-3-phosphocholine.

It belongs to the nuclear hormone receptor family. NR5 subfamily. As to quaternary structure, binds DNA as a monomer. Part of a complex consisting of SFPQ, NONO and NR5A1. Interacts with NR0B2. Interacts with DGKQ and CDK7. Binds to and activated by HIPK3. In terms of processing, acetylation stimulates the transcriptional activity. Post-translationally, sumoylation reduces CDK7-mediated phosphorylation on Ser-203. Phosphorylated on Ser-203 by CDK7. This phosphorylation promotes transcriptional activity.

The protein resides in the nucleus. Functionally, transcriptional activator. Seems to be essential for sexual differentiation and formation of the primary steroidogenic tissues. Binds to the Ad4 site found in the promoter region of steroidogenic P450 genes such as CYP11A, CYP11B and CYP21B. Also regulates the AMH/Muellerian inhibiting substance gene as well as the AHCH and STAR genes. 5'-YCAAGGYC-3' and 5'-RRAGGTCA-3' are the consensus sequences for the recognition by NR5A1. The SFPQ-NONO-NR5A1 complex binds to the CYP17 promoter and regulates basal and cAMP-dependent transcriptional activity. Binds phospholipids with a phosphatidylinositol (PI) headgroup, in particular PI(3,4)P2 and PI(3,4,5)P3. Activated by the phosphorylation of NR5A1 by HIPK3 leading to increased steroidogenic gene expression upon cAMP signaling pathway stimulation. This Equus caballus (Horse) protein is Steroidogenic factor 1 (NR5A1).